The primary structure comprises 160 residues: Small ribosomal subunit protein bS6 (160 aa).

This sequence belongs to the bacterial ribosomal protein bS6 family.

Its function is as follows. Binds together with bS18 to 16S ribosomal RNA. The polypeptide is Small ribosomal subunit protein bS6 (Ureaplasma parvum serovar 3 (strain ATCC 27815 / 27 / NCTC 11736)).